A 1579-amino-acid polypeptide reads, in one-letter code: Pentafunctional AROM polypeptide (1579 aa).

The segment at 1 to 383 (MLVKVPILGR…YGKSAHVVSD (383 aa)) is 3-dehydroquinate synthase. Residues 40-42 (DSN), 75-78 (EANK), 106-108 (GGI), and aspartate 111 contribute to the NAD(+) site. Arginine 122 is a binding site for 7-phospho-2-dehydro-3-deoxy-D-arabino-heptonate. Residue 131–132 (TS) participates in NAD(+) binding. 2 residues coordinate 7-phospho-2-dehydro-3-deoxy-D-arabino-heptonate: aspartate 138 and lysine 144. An NAD(+)-binding site is contributed by lysine 153. A 7-phospho-2-dehydro-3-deoxy-D-arabino-heptonate-binding site is contributed by asparagine 154. NAD(+)-binding positions include 171 to 174 (WLQS) and asparagine 182. Glutamate 186 is a Zn(2+) binding site. Residues 186-189 (EVIK) and lysine 249 each bind 7-phospho-2-dehydro-3-deoxy-D-arabino-heptonate. Residue glutamate 259 is the Proton acceptor; for 3-dehydroquinate synthase activity of the active site. 7-phospho-2-dehydro-3-deoxy-D-arabino-heptonate-binding positions include 263 to 267 (RNLLN) and histidine 270. Zn(2+) is bound at residue histidine 270. The active-site Proton acceptor; for 3-dehydroquinate synthase activity is the histidine 274. Residues histidine 286 and lysine 355 each contribute to the 7-phospho-2-dehydro-3-deoxy-D-arabino-heptonate site. Zn(2+) is bound at residue histidine 286. The EPSP synthase stretch occupies residues 396-862 (VYPFNNIPRD…WDVLHTELGA (467 aa)). The active-site For EPSP synthase activity is the cysteine 844. Residues 881–1071 (SVVIIGMRAA…IPTRRSAFVC (191 aa)) are shikimate kinase. Residue 886–893 (GMRAAGKT) coordinates ATP. The interval 1072–1284 (LTFENLTEYT…AAPGQLTVAE (213 aa)) is 3-dehydroquinase. The active-site Proton acceptor; for 3-dehydroquinate dehydratase activity is histidine 1189. Lysine 1218 acts as the Schiff-base intermediate with substrate; for 3-dehydroquinate dehydratase activity in catalysis. Positions 1297–1579 (KKDFFVVGSP…KAIYDAVTEI (283 aa)) are shikimate dehydrogenase.

This sequence in the N-terminal section; belongs to the sugar phosphate cyclases superfamily. Dehydroquinate synthase family. The protein in the 2nd section; belongs to the EPSP synthase family. In the 3rd section; belongs to the shikimate kinase family. It in the 4th section; belongs to the type-I 3-dehydroquinase family. This sequence in the C-terminal section; belongs to the shikimate dehydrogenase family. In terms of assembly, homodimer. Zn(2+) is required as a cofactor.

The protein localises to the cytoplasm. The catalysed reaction is 7-phospho-2-dehydro-3-deoxy-D-arabino-heptonate = 3-dehydroquinate + phosphate. The enzyme catalyses 3-dehydroquinate = 3-dehydroshikimate + H2O. It carries out the reaction shikimate + NADP(+) = 3-dehydroshikimate + NADPH + H(+). It catalyses the reaction shikimate + ATP = 3-phosphoshikimate + ADP + H(+). The catalysed reaction is 3-phosphoshikimate + phosphoenolpyruvate = 5-O-(1-carboxyvinyl)-3-phosphoshikimate + phosphate. Its pathway is metabolic intermediate biosynthesis; chorismate biosynthesis; chorismate from D-erythrose 4-phosphate and phosphoenolpyruvate: step 2/7. It participates in metabolic intermediate biosynthesis; chorismate biosynthesis; chorismate from D-erythrose 4-phosphate and phosphoenolpyruvate: step 3/7. The protein operates within metabolic intermediate biosynthesis; chorismate biosynthesis; chorismate from D-erythrose 4-phosphate and phosphoenolpyruvate: step 4/7. It functions in the pathway metabolic intermediate biosynthesis; chorismate biosynthesis; chorismate from D-erythrose 4-phosphate and phosphoenolpyruvate: step 5/7. Its pathway is metabolic intermediate biosynthesis; chorismate biosynthesis; chorismate from D-erythrose 4-phosphate and phosphoenolpyruvate: step 6/7. The AROM polypeptide catalyzes 5 consecutive enzymatic reactions in prechorismate polyaromatic amino acid biosynthesis. The protein is Pentafunctional AROM polypeptide of Candida glabrata (strain ATCC 2001 / BCRC 20586 / JCM 3761 / NBRC 0622 / NRRL Y-65 / CBS 138) (Yeast).